The chain runs to 172 residues: Small ribosomal subunit protein uS5 (172 aa).

Residues 17-80 (LREKMIAINR…EEARRNLAKI (64 aa)) enclose the S5 DRBM domain.

This sequence belongs to the universal ribosomal protein uS5 family. Part of the 30S ribosomal subunit. Contacts proteins S4 and S8.

Functionally, with S4 and S12 plays an important role in translational accuracy. Located at the back of the 30S subunit body where it stabilizes the conformation of the head with respect to the body. In Variovorax paradoxus (strain S110), this protein is Small ribosomal subunit protein uS5.